The following is a 67-amino-acid chain: ATP synthase F(0) complex subunit 8 (67 aa).

Residues 8–24 traverse the membrane as a helical segment; that stretch reads TWFTTILSTSFSIIHRL. Lys-54 carries the post-translational modification N6-acetyllysine; alternate. At Lys-54 the chain carries N6-succinyllysine; alternate. N6-acetyllysine is present on Lys-57.

It belongs to the ATPase protein 8 family. In terms of assembly, component of the ATP synthase complex composed at least of ATP5F1A/subunit alpha, ATP5F1B/subunit beta, ATP5MC1/subunit c (homooctomer), MT-ATP6/subunit a, MT-ATP8/subunit 8, ATP5ME/subunit e, ATP5MF/subunit f, ATP5MG/subunit g, ATP5MK/subunit k, ATP5MJ/subunit j, ATP5F1C/subunit gamma, ATP5F1D/subunit delta, ATP5F1E/subunit epsilon, ATP5PF/subunit F6, ATP5PB/subunit b, ATP5PD/subunit d, ATP5PO/subunit OSCP. ATP synthase complex consists of a soluble F(1) head domain (subunits alpha(3) and beta(3)) - the catalytic core - and a membrane F(0) domain - the membrane proton channel (subunits c, a, 8, e, f, g, k and j). These two domains are linked by a central stalk (subunits gamma, delta, and epsilon) rotating inside the F1 region and a stationary peripheral stalk (subunits F6, b, d, and OSCP). Interacts with PRICKLE3.

It is found in the mitochondrion membrane. Its function is as follows. Subunit 8, of the mitochondrial membrane ATP synthase complex (F(1)F(0) ATP synthase or Complex V) that produces ATP from ADP in the presence of a proton gradient across the membrane which is generated by electron transport complexes of the respiratory chain. ATP synthase complex consist of a soluble F(1) head domain - the catalytic core - and a membrane F(1) domain - the membrane proton channel. These two domains are linked by a central stalk rotating inside the F(1) region and a stationary peripheral stalk. During catalysis, ATP synthesis in the catalytic domain of F(1) is coupled via a rotary mechanism of the central stalk subunits to proton translocation. In vivo, can only synthesize ATP although its ATP hydrolase activity can be activated artificially in vitro. Part of the complex F(0) domain. The sequence is that of ATP synthase F(0) complex subunit 8 from Glis glis (Fat dormouse).